The primary structure comprises 272 residues: Pantothenate synthetase (272 aa).

Met27–His34 provides a ligand contact to ATP. Catalysis depends on His34, which acts as the Proton donor. Gln58 provides a ligand contact to (R)-pantoate. A beta-alanine-binding site is contributed by Gln58. Gly143–Asp146 contacts ATP. (R)-pantoate is bound at residue Gln149. ATP contacts are provided by residues Val172 and Leu180 to Arg183.

The protein belongs to the pantothenate synthetase family. Homodimer.

The protein localises to the cytoplasm. The catalysed reaction is (R)-pantoate + beta-alanine + ATP = (R)-pantothenate + AMP + diphosphate + H(+). Its pathway is cofactor biosynthesis; (R)-pantothenate biosynthesis; (R)-pantothenate from (R)-pantoate and beta-alanine: step 1/1. Its function is as follows. Catalyzes the condensation of pantoate with beta-alanine in an ATP-dependent reaction via a pantoyl-adenylate intermediate. This chain is Pantothenate synthetase, found in Aliarcobacter butzleri (strain RM4018) (Arcobacter butzleri).